A 173-amino-acid chain; its full sequence is NADH-ubiquinone oxidoreductase chain 6 (173 aa).

The next 5 membrane-spanning stretches (helical) occupy residues 1 to 21 (MVYF…GVAS), 28 to 48 (AALG…SYGG), 53 to 73 (LILF…TAAL), 87 to 107 (VLMY…YFLV), and 139 to 159 (LGGW…FVVL).

The protein belongs to the complex I subunit 6 family.

It localises to the mitochondrion membrane. The catalysed reaction is a ubiquinone + NADH + 5 H(+)(in) = a ubiquinol + NAD(+) + 4 H(+)(out). In terms of biological role, core subunit of the mitochondrial membrane respiratory chain NADH dehydrogenase (Complex I) that is believed to belong to the minimal assembly required for catalysis. Complex I functions in the transfer of electrons from NADH to the respiratory chain. The immediate electron acceptor for the enzyme is believed to be ubiquinone. This chain is NADH-ubiquinone oxidoreductase chain 6 (MT-ND6), found in Scyliorhinus canicula (Small-spotted catshark).